The following is a 584-amino-acid chain: Ras-specific guanine nucleotide-releasing factor RalGPS1 (584 aa).

The segment covering 1-13 (MDLMNGQSSSVNI) has biased composition (polar residues). Disordered stretches follow at residues 1 to 29 (MDLM…SLSD), 285 to 338 (IEPG…IPHG), and 380 to 407 (HVPS…SELS). Over residues 14–26 (AATASEKSSSSES) the composition is skewed to low complexity. A Ras-GEF domain is found at 50–288 (TPEEYAGQIT…YKLSLKIEPG (239 aa)). A PXXP motif is present at residues 326–329 (PTPP). Residues 388–404 (ESSTLSSGISIGSSDGS) show a composition bias toward low complexity. The PH domain maps to 458-570 (AVTIQGVLRR…WFKHLSAACQ (113 aa)).

The protein localises to the cytoplasm. It localises to the cell membrane. In terms of biological role, guanine nucleotide exchange factor. May be involved in cytoskeletal organization. The protein is Ras-specific guanine nucleotide-releasing factor RalGPS1 (RALGPS1) of Gallus gallus (Chicken).